A 633-amino-acid polypeptide reads, in one-letter code: MSADLSIGNEIKDSFKETHKWVQNNLKWLKDIEQFYRERAKLEKDYSERLSRLSAEYFNKKSSTSVPISVGDTPTTTPGSIEAAGVVAWNEILSQTDMISKDHDQLSTDFENHVANQLSGLFTKLDMTLSKINGFNNDMVNKKDNIYHELEKAKKDYDEACSTMEMARNRYTKASNDRNKKKLDEKEMEMNKCKNEYLIKINQANRTKDKYYFQDVPEVLDLLQDVNEAKTLFLNDLWLKAASVENDLGANVSKRLQAANSVVKQNKPSLNTAIFIKHNLKNWKEPQDFVYKPSPVWHDDEKFAVPSSLEVEDLRIKLAKAENDYNSLQDKTQNELSKLSTLNKIKHEMKTNEDNINATKFYDTLKEYLNVVSPFTSHETLKLQAEVQIESIQNNVPEEYDLSTDNIDLSKTKKKSGIFSKFKHNILNVDSKPSSGGSTGNGNGGPLHITSLFNTSRRTRLGSAPNNAGEDSDNNSIRTTSTNNTKKTTQNSSDDGKNKVLYAYVQKDDDEITITPGDKISLVARDTGSGWTKINNDTTGETGLVPTTYIRISSAATVKANDRGPAPEVPPPRRSTLPVRTMEAIYAYEAQGDDEISIDPGDIITVIRGDDGSGWTYGECDGLKGLFPTSYCK.

Residues 5–271 form the F-BAR domain; the sequence is LSIGNEIKDS…VVKQNKPSLN (267 aa). A coiled-coil region spans residues 138–210; that stretch reads DMVNKKDNIY…INQANRTKDK (73 aa). Phosphoserine is present on residues S327, S463, S472, and S476. Residues 429–495 form a disordered region; the sequence is VDSKPSSGGS…KKTTQNSSDD (67 aa). Low complexity predominate over residues 474-493; the sequence is NNSIRTTSTNNTKKTTQNSS. SH3 domains follow at residues 493 to 555 and 577 to 633; these read SDDG…ISSA and LPVR…SYCK.

Belongs to the BZZ1 family. In terms of assembly, interacts with LAS17 and MYO5.

The protein resides in the cytoplasm. It is found in the cytoskeleton. The protein localises to the actin patch. Its function is as follows. Plays a role in endocytosis and trafficking to the vacuole. Functions with type I myosins to restore polarity of the actin cytoskeleton after NaCl stress. In Saccharomyces cerevisiae (strain ATCC 204508 / S288c) (Baker's yeast), this protein is Protein BZZ1 (BZZ1).